The primary structure comprises 310 residues: tRNA uridine(34) hydroxylase (310 aa).

The region spanning 127 to 225 (KDKDTIVIDT…YLEDISKEES (99 aa)) is the Rhodanese domain. Cys-185 (cysteine persulfide intermediate) is an active-site residue.

Belongs to the TrhO family.

The catalysed reaction is uridine(34) in tRNA + AH2 + O2 = 5-hydroxyuridine(34) in tRNA + A + H2O. Its function is as follows. Catalyzes oxygen-dependent 5-hydroxyuridine (ho5U) modification at position 34 in tRNAs. This Prochlorococcus marinus (strain MIT 9515) protein is tRNA uridine(34) hydroxylase.